Consider the following 365-residue polypeptide: Elongation factor Tu (365 aa).

GTP-binding positions include 1–7 (HVDHGKT), 62–66 (DCPGH), and 117–120 (NKCD). In terms of domain architecture, tr-type G spans 1-185 (HVDHGKTTLT…ILDTYIPEPK (185 aa)). Thr7 lines the Mg(2+) pocket.

This sequence belongs to the TRAFAC class translation factor GTPase superfamily. Classic translation factor GTPase family. EF-Tu/EF-1A subfamily. Monomer.

The protein localises to the cytoplasm. It catalyses the reaction GTP + H2O = GDP + phosphate + H(+). GTP hydrolase that promotes the GTP-dependent binding of aminoacyl-tRNA to the A-site of ribosomes during protein biosynthesis. The polypeptide is Elongation factor Tu (Buchnera aphidicola subsp. Melaphis rhois).